An 883-amino-acid chain; its full sequence is Sodium/sulfate cotransporter 2 (883 aa).

Transmembrane regions (helical) follow at residues 3 to 23 (FGWQ…VMAA), 30 to 50 (VTFT…VTVA), 60 to 80 (GLLT…TGGL), 106 to 126 (MCLS…PILI), 139 to 159 (LLIP…IGTS), and 185 to 205 (IFDI…FILL). 4 RCK C-terminal domains span residues 211-295 (LPGN…EFGL), 317-401 (VFTP…SKNN), 406-491 (VRAV…FPGL), and 497-583 (EQVD…DKSF). Transmembrane regions (helical) follow at residues 600–620 (MVIG…GGLK), 624–644 (YIHL…TGCM), 657–677 (VYLT…TGVA), 693–713 (SDGA…ELLT), 774–794 (FAII…FILC), and 802–822 (VWIV…LYFL). The interval 857–883 (QASRTGSDGTGSSDSPRALGVPKVITA) is disordered. Residues 861 to 871 (TGSDGTGSSDS) are compositionally biased toward low complexity.

It belongs to the divalent anion:Na+ symporter (DASS) superfamily. Na+/sulfate symporter (TC 2.A.47.4) family.

The protein resides in the cell membrane. Its function is as follows. Na(+)/sulfate cotransporter with a probable high-affinity for sulfate and a proteasome dependent turnover. The chain is Sodium/sulfate cotransporter 2 (SLT2) from Chlamydomonas reinhardtii (Chlamydomonas smithii).